The primary structure comprises 305 residues: Acetaldehyde dehydrogenase (305 aa).

13 to 16 is an NAD(+) binding site; the sequence is SGNI. The active-site Acyl-thioester intermediate is the Cys-128. Residues 159–167 and Asn-278 contribute to the NAD(+) site; that span reads SAGPGTRQN.

Belongs to the acetaldehyde dehydrogenase family.

The catalysed reaction is acetaldehyde + NAD(+) + CoA = acetyl-CoA + NADH + H(+). This is Acetaldehyde dehydrogenase from Roseiflexus sp. (strain RS-1).